Consider the following 274-residue polypeptide: MQFSKMHGLGNDFMVIDGVTQNVYLTEELIRKWADRHRGVGFDQLLLVEPPYDPELDFHYRIFNADGSEVSQCGNGARCFARFVTLKGLTNKQDIGVSTAKGKMVLSLQDDGQVRVNMGEPIWEPAQIPFTANKFEKNYILRTDIQTVLCGVVSMGNPHCVLQVENIQTANVNELGALLERHERFPERANIGFMQVINRNHIKLRVFERGAGETQACGSGACGAVAVGIMQGLLDSRVQVDLPGGTLHIEWQGVGSPLYMTGDAEHIYDGAVKS.

Substrate is bound by residues Asn-11, Gln-44, and Asn-64. Cys-73 acts as the Proton donor in catalysis. Substrate-binding positions include 74 to 75 (GN), Asn-157, Asn-190, and 208 to 209 (ER). Catalysis depends on Cys-217, which acts as the Proton acceptor. 218 to 219 (GS) contributes to the substrate binding site.

The protein belongs to the diaminopimelate epimerase family. As to quaternary structure, homodimer.

The protein localises to the cytoplasm. The catalysed reaction is (2S,6S)-2,6-diaminopimelate = meso-2,6-diaminopimelate. Its pathway is amino-acid biosynthesis; L-lysine biosynthesis via DAP pathway; DL-2,6-diaminopimelate from LL-2,6-diaminopimelate: step 1/1. Its function is as follows. Catalyzes the stereoinversion of LL-2,6-diaminopimelate (L,L-DAP) to meso-diaminopimelate (meso-DAP), a precursor of L-lysine and an essential component of the bacterial peptidoglycan. The protein is Diaminopimelate epimerase of Glaesserella parasuis serovar 5 (strain SH0165) (Haemophilus parasuis).